Consider the following 173-residue polypeptide: Archaemetzincin (173 aa).

His-130 lines the Zn(2+) pocket. The active-site Proton acceptor is the Glu-131. The Zn(2+) site is built by His-134, His-140, Cys-141, Cys-146, Cys-165, and Cys-168.

It belongs to the peptidase M54 family. As to quaternary structure, monomer. It depends on Zn(2+) as a cofactor.

Functionally, probable zinc metalloprotease whose natural substrate is unknown. The protein is Archaemetzincin of Halobacterium salinarum (strain ATCC 29341 / DSM 671 / R1).